The primary structure comprises 932 residues: Receptor-like protein 9a (932 aa).

Positions 1–28 (MLIFTIPQFFFAAWVMVVSLQMQGYISC) are cleaved as a signal peptide. Topologically, residues 29–888 (IEKERKGLLE…DDETAIDMET (860 aa)) are extracellular. Asn53, Asn80, and Asn90 each carry an N-linked (GlcNAc...) asparagine glycan. LRR repeat units follow at residues 97–122 (FEELRTLNLYDFGCTGWFDDIHGYKS), 126–152 (LKKLEILDMGNNEVNNSVLPFLNAASS), 154–174 (RTLILHGNNMEGTFPMKELKD), 175–200 (LSNLELLDLSGNLLNGPVPGLAVLHK), 202–222 (HALDLSDNTFSGSLGREGLCQ), 223–246 (LKNLQELDLSQNEFTGPFPQCFSS), 247–273 (LTQLQVLDMSSNQFNGTLPSVISNLDS), 275–295 (EYLSLSDNKFEGFFSFDLIAN), 296–320 (LSKLKVFKLSSKSSLLHIESEISLQ), 322–345 (KFRLSVIDLKYCNLEAVPSFLQQQ), 346–368 (KDLRLINLSNNKLTGISPSWFLE), 370–393 (YPKLRVLLLWNNSFTIFHLPRLLV), 394–417 (HSLHVLDLSVNKFDEWLPNNIGHV), 418–441 (LPNISHLNLSNNGFQGNLPSSFSE), 443–466 (KKIFFLDLSHNNLSGSLPKKFCIG), 468–491 (SSLSILKLSYNRFSGKIFPQPMKL), 492–514 (ESLRVLIADNNQFTEITDVLIHS), 516–535 (GLVFLELSNNSLQGVIPSWF), 536–560 (GGFYFLYLSVSDNLLNGTIPSTLFN), 561–583 (VSFQLLDLSRNKFSGNLPSHFSF), 585–605 (HMGLLYLHDNEFSGPVPSTLL), 606–629 (ENVMLLDLRNNKLSGTIPRFVSNR), 631–652 (FLYLLLRGNALTGHIPTSLCEL), 653–676 (KSIRVLDLANNRLNGSIPPCLNNV), 745–769 (FKFMFGLDFSSNELIGEIPRELGDF), 770–792 (QRIRALNLSHNSLSGLVPESFSN), 794–817 (TDIESIDLSFNVLHGPIPHDLTKL), and 819–842 (YIVVFNVSYNNLSGLIPSQGKFLS). Asn140 carries an N-linked (GlcNAc...) asparagine glycan. 2 N-linked (GlcNAc...) asparagine glycosylation sites follow: Asn261 and Asn295. 2 N-linked (GlcNAc...) asparagine glycosylation sites follow: Asn352 and Asn380. 3 N-linked (GlcNAc...) asparagine glycosylation sites follow: Asn420, Asn425, and Asn454. 3 N-linked (GlcNAc...) asparagine glycosylation sites follow: Asn524, Asn551, and Asn560. 2 N-linked (GlcNAc...) asparagine glycosylation sites follow: Asn666 and Asn675. N-linked (GlcNAc...) asparagine glycosylation is found at Asn776 and Asn792. N-linked (GlcNAc...) asparagine glycans are attached at residues Asn824, Asn829, Asn860, and Asn866. The helical transmembrane segment at 889–909 (FYWSLFATYGITWMAFIVFLC) threads the bilayer. The Cytoplasmic segment spans residues 910–932 (FDSPWRQAWFRLVNVFVSFLKCV).

This sequence belongs to the RLP family.

Its subcellular location is the cell membrane. The chain is Receptor-like protein 9a from Arabidopsis thaliana (Mouse-ear cress).